We begin with the raw amino-acid sequence, 166 residues long: Probable chemoreceptor glutamine deamidase CheD 1 (166 aa).

It belongs to the CheD family.

It catalyses the reaction L-glutaminyl-[protein] + H2O = L-glutamyl-[protein] + NH4(+). In terms of biological role, probably deamidates glutamine residues to glutamate on methyl-accepting chemotaxis receptors (MCPs), playing an important role in chemotaxis. The chain is Probable chemoreceptor glutamine deamidase CheD 1 from Leptospira interrogans serogroup Icterohaemorrhagiae serovar copenhageni (strain Fiocruz L1-130).